The sequence spans 123 residues: UPF0231 protein PMI2039 (123 aa).

Belongs to the UPF0231 family.

The chain is UPF0231 protein PMI2039 from Proteus mirabilis (strain HI4320).